The chain runs to 272 residues: Formamidopyrimidine-DNA glycosylase (272 aa).

Pro2 functions as the Schiff-base intermediate with DNA in the catalytic mechanism. Residue Glu3 is the Proton donor of the active site. Lys56 acts as the Proton donor; for beta-elimination activity in catalysis. The DNA site is built by His89, Arg108, and Lys149. The segment at 234 to 268 adopts an FPG-type zinc-finger fold; it reads LAYGRAGEMCVNCETPLENLKLGQRASVFCPQCQP. The active-site Proton donor; for delta-elimination activity is the Arg258.

The protein belongs to the FPG family. Monomer. Requires Zn(2+) as cofactor.

It carries out the reaction Hydrolysis of DNA containing ring-opened 7-methylguanine residues, releasing 2,6-diamino-4-hydroxy-5-(N-methyl)formamidopyrimidine.. It catalyses the reaction 2'-deoxyribonucleotide-(2'-deoxyribose 5'-phosphate)-2'-deoxyribonucleotide-DNA = a 3'-end 2'-deoxyribonucleotide-(2,3-dehydro-2,3-deoxyribose 5'-phosphate)-DNA + a 5'-end 5'-phospho-2'-deoxyribonucleoside-DNA + H(+). Its function is as follows. Involved in base excision repair of DNA damaged by oxidation or by mutagenic agents. Acts as a DNA glycosylase that recognizes and removes damaged bases. Has a preference for oxidized purines, such as 7,8-dihydro-8-oxoguanine (8-oxoG). Has AP (apurinic/apyrimidinic) lyase activity and introduces nicks in the DNA strand. Cleaves the DNA backbone by beta-delta elimination to generate a single-strand break at the site of the removed base with both 3'- and 5'-phosphates. In Acinetobacter baylyi (strain ATCC 33305 / BD413 / ADP1), this protein is Formamidopyrimidine-DNA glycosylase.